Reading from the N-terminus, the 332-residue chain is 2,3-diketo-L-gulonate reductase (332 aa).

His-44 acts as the Proton donor in catalysis. NAD(+) is bound by residues 168–174, 224–225, and 304–306; these read ITMVDMS, WK, and GHE.

The protein belongs to the LDH2/MDH2 oxidoreductase family. DlgD subfamily. As to quaternary structure, homodimer.

The protein localises to the cytoplasm. It catalyses the reaction 3-dehydro-L-gulonate + NAD(+) = 2,3-dioxo-L-gulonate + NADH + H(+). The catalysed reaction is 3-dehydro-L-gulonate + NADP(+) = 2,3-dioxo-L-gulonate + NADPH + H(+). In terms of biological role, catalyzes the reduction of 2,3-diketo-L-gulonate in the presence of NADH, to form 3-keto-L-gulonate. This chain is 2,3-diketo-L-gulonate reductase, found in Shigella boydii serotype 4 (strain Sb227).